The chain runs to 219 residues: Leukocyte surface antigen CD53 (219 aa).

At 2 to 11 (GMSSLKLLKY) the chain is on the cytoplasmic side. Residues 12 to 32 (VLFFFNFLFWVCGCCILGFGI) form a helical membrane-spanning segment. Over 33–54 (HLLVQNTYGILFRNLPFLTLGN) the chain is Extracellular. Residues 55–69 (VLVIVGSIIMVVAFL) traverse the membrane as a helical segment. The Cytoplasmic segment spans residues 70-80 (GCMGSIKENKC). Residues 81-106 (LLMSFFVLLLLILLAEVTLAILLFVY) form a helical membrane-spanning segment. The Extracellular segment spans residues 107–181 (EKKINTLVAE…KKGQAWFHSN (75 aa)). N-linked (GlcNAc...) asparagine glycans are attached at residues Asn-119, Asn-129, and Asn-148. A helical membrane pass occupies residues 182–206 (FLYIGIVTICVCVIQVLGMSFALTL). The Cytoplasmic segment spans residues 207–219 (NCQIDKTSQALGL).

It belongs to the tetraspanin (TM4SF) family. As to quaternary structure, interacts with SCIMP. Interacts with CD45/PTPRC. Interacts with IL7R. Interacts with RBL2 and PPP2CA. As to expression, spleen and thymus, B-cells, monocytes, macrophages, neutrophils, single (CD4 or CD8) positive thymocytes, peripheral T-cells.

The protein resides in the cell membrane. It localises to the cell junction. Its subcellular location is the membrane. Its function is as follows. Required for efficient formation of myofibers in regenerating muscle at the level of cell fusion. May be involved in growth regulation in hematopoietic cells. The sequence is that of Leukocyte surface antigen CD53 (Cd53) from Rattus norvegicus (Rat).